A 64-amino-acid chain; its full sequence is Small ribosomal subunit protein bS21 (64 aa).

The protein belongs to the bacterial ribosomal protein bS21 family.

The sequence is that of Small ribosomal subunit protein bS21 from Neorickettsia sennetsu (strain ATCC VR-367 / Miyayama) (Ehrlichia sennetsu).